Here is a 252-residue protein sequence, read N- to C-terminus: Imidazole glycerol phosphate synthase subunit HisF (252 aa).

Catalysis depends on residues Asp-11 and Asp-130.

Belongs to the HisA/HisF family. Heterodimer of HisH and HisF.

The protein resides in the cytoplasm. The catalysed reaction is 5-[(5-phospho-1-deoxy-D-ribulos-1-ylimino)methylamino]-1-(5-phospho-beta-D-ribosyl)imidazole-4-carboxamide + L-glutamine = D-erythro-1-(imidazol-4-yl)glycerol 3-phosphate + 5-amino-1-(5-phospho-beta-D-ribosyl)imidazole-4-carboxamide + L-glutamate + H(+). It functions in the pathway amino-acid biosynthesis; L-histidine biosynthesis; L-histidine from 5-phospho-alpha-D-ribose 1-diphosphate: step 5/9. Functionally, IGPS catalyzes the conversion of PRFAR and glutamine to IGP, AICAR and glutamate. The HisF subunit catalyzes the cyclization activity that produces IGP and AICAR from PRFAR using the ammonia provided by the HisH subunit. The protein is Imidazole glycerol phosphate synthase subunit HisF of Polynucleobacter necessarius subsp. necessarius (strain STIR1).